Here is an 81-residue protein sequence, read N- to C-terminus: Antitoxin MT2731 (81 aa).

Antitoxin component of a type II toxin-antitoxin (TA) system. Neutralizes the effect of cognate toxin MT2730. The protein is Antitoxin MT2731 of Mycobacterium tuberculosis (strain CDC 1551 / Oshkosh).